Here is a 510-residue protein sequence, read N- to C-terminus: Maturase K (510 aa).

Belongs to the intron maturase 2 family. MatK subfamily.

Its subcellular location is the plastid. It is found in the chloroplast. Usually encoded in the trnK tRNA gene intron. Probably assists in splicing its own and other chloroplast group II introns. This Penstemon heterophyllus (Foothill penstemon) protein is Maturase K.